The chain runs to 541 residues: Ascorbate transporter, chloroplastic (541 aa).

Residues 1 to 28 (MALGGLISNRNFGSFIGSGNGCQRLGKS) constitute a chloroplast transit peptide. A run of 11 helical transmembrane segments spans residues 133-155 (VIVL…MSIA), 170-190 (VGLI…LGGI), 199-219 (VVLG…PIAA), 221-241 (LGLP…GVAM), 263-283 (LVYS…PMLI), 286-306 (FGWP…FLLW), 352-372 (VWAL…LLTW), 390-410 (LLCV…GWIA), 430-450 (IGFL…TPAM), 481-501 (AGVL…FGTA), and 515-535 (VFKV…LFAT).

This sequence belongs to the major facilitator superfamily. Sodium/anion cotransporter (TC 2.A.1.14) family. As to expression, expressed in stems, developing siliques, leaf mesophyll cells and sepals of mature flowers. Not detected in roots. Detected in palisade tissue rather than spongy tissue from the leaves.

Its subcellular location is the plastid. It is found in the chloroplast inner membrane. With respect to regulation, insensitive to dehydroascorbate, p-isoascorbate, inorganic phosphate, glutamate, ATP, p-aminohippuric acid or tetraethylammonium. In terms of biological role, inorganic phosphate and probable anion transporter. Ascorbate transporter bridging the chloroplast envelope. Transports ascorbate from the cytosol into the chloroplast. Requires chloride ions and the presence of an electrochemical potential across the membrane for activity. This chain is Ascorbate transporter, chloroplastic (PHT4;4), found in Arabidopsis thaliana (Mouse-ear cress).